Consider the following 290-residue polypeptide: Elongation factor Ts (290 aa).

The involved in Mg(2+) ion dislocation from EF-Tu stretch occupies residues 79 to 82 (TDFV).

It belongs to the EF-Ts family.

The protein localises to the cytoplasm. Associates with the EF-Tu.GDP complex and induces the exchange of GDP to GTP. It remains bound to the aminoacyl-tRNA.EF-Tu.GTP complex up to the GTP hydrolysis stage on the ribosome. The polypeptide is Elongation factor Ts (Pseudoalteromonas atlantica (strain T6c / ATCC BAA-1087)).